Here is an 89-residue protein sequence, read N- to C-terminus: Small ribosomal subunit protein uS19 (89 aa).

It belongs to the universal ribosomal protein uS19 family.

Its function is as follows. Protein S19 forms a complex with S13 that binds strongly to the 16S ribosomal RNA. This chain is Small ribosomal subunit protein uS19, found in Xylella fastidiosa (strain M12).